A 352-amino-acid polypeptide reads, in one-letter code: Ubiquitin thioesterase otulin (352 aa).

The disordered stretch occupies residues 1 to 48; the sequence is MSRGTMPQPEAWPGASCAETPAREAAATARDGGKAAASGQPRPEMQCP. Positions 18 to 37 are enriched in low complexity; sequence AETPAREAAATARDGGKAAA. Residues 52–57 carry the PIM motif motif; the sequence is EEDMYR. Y56 carries the post-translational modification Phosphotyrosine. Linear diubiquitin binding regions lie at residues 95–96 and 124–126; these read EW and RGD. Residues 118 to 346 enclose the OTU domain; the sequence is TSIRRVRGDN…DRHYNIPVRV (229 aa). D126 is an active-site residue. C129 serves as the catalytic Nucleophile. 3 linear diubiquitin binding regions span residues 255 to 259, 283 to 289, and 336 to 338; these read FFSVL, TGGLEQV, and DDR. The active site involves H339.

The protein belongs to the peptidase C65 family. Otulin subfamily. Interacts (via the PUB domain) with RNF31 (via the PIM motif); the interaction is direct. Interacts with DVL2. Post-translationally, ubiquitinated. Acetylated. In terms of processing, phosphorylated. Phosphorylation at Tyr-56 prevents interaction with RNF31; dephosphorylation promotes interaction with RNF31 and the LUBAC complex.

Its subcellular location is the cytoplasm. The catalysed reaction is Thiol-dependent hydrolysis of ester, thioester, amide, peptide and isopeptide bonds formed by the C-terminal Gly of ubiquitin (a 76-residue protein attached to proteins as an intracellular targeting signal).. Functionally, deubiquitinase that specifically removes linear ('Met-1'-linked) polyubiquitin chains to substrates and acts as a regulator of angiogenesis and innate immune response. Required during angiogenesis, craniofacial and neuronal development by regulating the canonical Wnt signaling together with the LUBAC complex. Acts as a negative regulator of NF-kappa-B by regulating the activity of the LUBAC complex. OTULIN function is mainly restricted to homeostasis of the LUBAC complex: acts by removing 'Met-1'-linked autoubiquitination of the LUBAC complex, thereby preventing inactivation of the LUBAC complex. Acts as a key negative regulator of inflammation by restricting spontaneous inflammation and maintaining immune homeostasis. In myeloid cell, required to prevent unwarranted secretion of cytokines leading to inflammation and autoimmunity by restricting linear polyubiquitin formation. Plays a role in innate immune response by restricting linear polyubiquitin formation on LUBAC complex in response to NOD2 stimulation, probably to limit NOD2-dependent pro-inflammatory signaling. The sequence is that of Ubiquitin thioesterase otulin from Homo sapiens (Human).